A 256-amino-acid chain; its full sequence is Alcohol dehydrogenase (256 aa).

12 to 35 (FVAGLGGIGLDTSKELLKRDLKNL) contacts NAD(+). Residue Ser140 participates in substrate binding. The active-site Proton acceptor is the Tyr153.

Belongs to the short-chain dehydrogenases/reductases (SDR) family. Homodimer.

It carries out the reaction a primary alcohol + NAD(+) = an aldehyde + NADH + H(+). It catalyses the reaction a secondary alcohol + NAD(+) = a ketone + NADH + H(+). In Drosophila sechellia (Fruit fly), this protein is Alcohol dehydrogenase (Adh).